Reading from the N-terminus, the 230-residue chain is N-(5'-phosphoribosyl)anthranilate isomerase (230 aa).

Belongs to the TrpF family.

The enzyme catalyses N-(5-phospho-beta-D-ribosyl)anthranilate = 1-(2-carboxyphenylamino)-1-deoxy-D-ribulose 5-phosphate. The protein operates within amino-acid biosynthesis; L-tryptophan biosynthesis; L-tryptophan from chorismate: step 3/5. The sequence is that of N-(5'-phosphoribosyl)anthranilate isomerase from Thermosynechococcus vestitus (strain NIES-2133 / IAM M-273 / BP-1).